The following is a 370-amino-acid chain: Early nodulin-like protein 1 (370 aa).

The signal sequence occupies residues M1–A27. Residues W28 to A129 form the Phytocyanin domain. An N-linked (GlcNAc...) asparagine glycan is attached at N58. The cysteines at positions 83 and 117 are disulfide-linked. A compositionally biased stretch (low complexity) spans S135–S175. A disordered region spans residues S135–A347. Residues V176–L194 are compositionally biased toward polar residues. Composition is skewed to low complexity over residues S195 to A205 and S215 to A290. A compositionally biased stretch (pro residues) spans T291–S305. Positions P306 to S318 are enriched in low complexity. Polar residues predominate over residues T319–N334. The N-linked (GlcNAc...) asparagine glycan is linked to N334. N345 is lipidated: GPI-anchor amidated asparagine. A propeptide spans S346–A370 (removed in mature form).

The protein belongs to the early nodulin-like (ENODL) family. Mostly expressed in stems, leaves and flowers, and, to a lower extent, in seedlings, roots and seeds.

The protein localises to the cell membrane. Functionally, may act as a carbohydrate transporter. This Arabidopsis thaliana (Mouse-ear cress) protein is Early nodulin-like protein 1.